The chain runs to 349 residues: Myocyte-specific enhancer factor 2B (349 aa).

An MADS-box domain is found at 3–57 (RKKIQISRILDQRNRQVTFTKRKFGLMKKAYELSVLCDCDIALIIFNSAQRLFQY). The segment at residues 58 to 86 (ASSDMDRVLLKYTEYSEPHESRTNADILQ) is a DNA-binding region (mef2-type). Disordered stretches follow at residues 237-317 (GSFA…DFPR) and 330-349 (AEPL…SWPR).

It belongs to the MEF2 family. As to quaternary structure, heterodimer. Interacts with HDAC9. Interacts with HDAC7. As to expression, highest expression found in embryonic heart and skeletal muscle. Low levels found in adult spleen, lung and testis while no expression is found in adult heart, brain or skeletal muscle.

The protein localises to the nucleus. In terms of biological role, transcriptional activator which binds specifically to the MEF2 element, 5'-YTA[AT](4)TAR-3', found in numerous muscle-specific genes. Activates transcription via this element. May be involved in muscle-specific and/or growth factor-related transcription. The protein is Myocyte-specific enhancer factor 2B (Mef2b) of Mus musculus (Mouse).